Reading from the N-terminus, the 730-residue chain is Heterogeneous nuclear ribonucleoprotein M (730 aa).

The segment covering 1 to 13 (MAAGVEAAAEVAA) has biased composition (low complexity). The segment at 1–62 (MAAGVEAAAE…NIKRGGNRFE (62 aa)) is disordered. An N-acetylalanine modification is found at Ala-2. Lys-17 is covalently cross-linked (Glycyl lysine isopeptide (Lys-Gly) (interchain with G-Cter in SUMO2)). The residue at position 29 (Ser-29) is a Phosphoserine. Residue Lys-37 forms a Glycyl lysine isopeptide (Lys-Gly) (interchain with G-Cter in SUMO2) linkage. Residues 38-50 (GEGERPAQNEKRK) show a composition bias toward basic and acidic residues. Glycyl lysine isopeptide (Lys-Gly) (interchain with G-Cter in SUMO2) cross-links involve residues Lys-69 and Lys-83. RRM domains lie at 71–149 (YRAF…EDPD) and 204–281 (STVF…MDER). Ser-86 bears the Phosphoserine mark. Glycyl lysine isopeptide (Lys-Gly) (interchain with G-Cter in SUMO2) cross-links involve residues Lys-88 and Lys-127. N6-acetyllysine; alternate is present on Lys-134. A Glycyl lysine isopeptide (Lys-Gly) (interchain with G-Cter in SUMO2); alternate cross-link involves residue Lys-134. Glycyl lysine isopeptide (Lys-Gly) (interchain with G-Cter in SUMO2) cross-links involve residues Lys-143 and Lys-145. Ser-204 carries the phosphoserine modification. Residue Lys-221 forms a Glycyl lysine isopeptide (Lys-Gly) (interchain with G-Cter in SUMO2) linkage. Lys-277 bears the N6-acetyllysine; alternate mark. Lys-277 participates in a covalent cross-link: Glycyl lysine isopeptide (Lys-Gly) (interchain with G-Cter in SUMO2); alternate. Glycyl lysine isopeptide (Lys-Gly) (interchain with G-Cter in SUMO2) cross-links involve residues Lys-285 and Lys-345. Residues Ser-365 and Ser-377 each carry the phosphoserine modification. Residues Lys-381 and Lys-388 each participate in a glycyl lysine isopeptide (Lys-Gly) (interchain with G-Cter in SUMO2) cross-link. Position 397 is a phosphoserine (Ser-397). Tandem repeats lie at residues 400–405 (GIERMG), 407–412 (GIDRLG), 415–420 (GMERMG), and 426–431 (GMDRVG). Positions 400 to 608 (GIERMGPGID…ALGAGIERMG (209 aa)) are 27 X 6 AA repeats of [GEVSTPAN]-[ILMV]-[DE]-[RH]-[MLVI]-[GAV]. Phosphoserine is present on Ser-432. Tandem repeats lie at residues 433–438 (EIERMG), 440–445 (VMDRMG), and 446–451 (SVERMG). Residue Ser-452 is modified to Phosphoserine. A run of 4 repeats spans residues 453–458 (GIERMG), 461–466 (GLDHMA), 468–473 (SIERMG), and 475–480 (TMERIG). The residue at position 468 (Ser-468) is a Phosphoserine. Ser-481 carries the phosphoserine modification. 16 consecutive repeat copies span residues 482-487 (GVERMG), 493-498 (GLERMA), 500-505 (PIDRVG), 507-512 (TIERMG), 514-519 (GVERMG), 521-526 (AIERMG), 528-533 (SMERMV), 540-545 (GLERMG), 547-552 (VMDRMA), 554-559 (GLERMG), 562-566 (NLERM), 567-572 (GLERMG), 575-579 (SLERM), 580-585 (GLERMG), 588-593 (SLERMG), and 603-608 (GIERMG). An Omega-N-methylarginine modification is found at Arg-496. Ser-528 carries the phosphoserine modification. Ser-575 is modified (phosphoserine). Phosphoserine is present on Ser-588. Phosphoserine is present on residues Ser-618, Ser-633, and Ser-637. Lys-651 participates in a covalent cross-link: Glycyl lysine isopeptide (Lys-Gly) (interchain with G-Cter in SUMO2). One can recognise an RRM 3 domain in the interval 653-729 (CQIFVRNLPF…REIDVRIDRN (77 aa)). A Phosphothreonine modification is found at Thr-665. Lys-667 is covalently cross-linked (Glycyl lysine isopeptide (Lys-Gly) (interchain with G-Cter in SUMO2)). Lys-672 is subject to N6-acetyllysine. Glycyl lysine isopeptide (Lys-Gly) (interchain with G-Cter in SUMO2) cross-links involve residues Lys-685 and Lys-692. An N6-acetyllysine; alternate modification is found at Lys-698. A Glycyl lysine isopeptide (Lys-Gly) (interchain with G-Cter in SUMO2); alternate cross-link involves residue Lys-698. Lys-698 is covalently cross-linked (Glycyl lysine isopeptide (Lys-Gly) (interchain with G-Cter in SUMO1); alternate). Position 701 is a phosphoserine (Ser-701). Lys-716 participates in a covalent cross-link: Glycyl lysine isopeptide (Lys-Gly) (interchain with G-Cter in SUMO2).

In terms of assembly, identified in the spliceosome C complex. Interacts with PPIA/CYPA. Post-translationally, sumoylated.

Its subcellular location is the nucleus. It is found in the nucleolus. Its function is as follows. Pre-mRNA binding protein in vivo, binds avidly to poly(G) and poly(U) RNA homopolymers in vitro. Involved in splicing. Acts as a receptor for carcinoembryonic antigen in Kupffer cells, may initiate a series of signaling events leading to tyrosine phosphorylation of proteins and induction of IL-1 alpha, IL-6, IL-10 and tumor necrosis factor alpha cytokines. The chain is Heterogeneous nuclear ribonucleoprotein M (HNRNPM) from Homo sapiens (Human).